Reading from the N-terminus, the 668-residue chain is MSQSVSLTFPDGSVRSFPAGATGRDVAESISKSLAKSAVAIAIDGGVRDLSDAVTDGKIEIITRKDPRALELIRHDAAHVMAEAVQELWPGTQVTIGPVIENGFYYDFAKNEPFTPDDLPKIEKKMKEIIARNAPFTKQIWSREKAKEVFAAKGEQYKVELVDAIPEGQDLKIYHQGEWFDLCRGPHMASTGQVGTAFKLMKVAGAYWRGDSNNAMLSRIYGTAWADQADLDNYLHMLAEAEKRDHRKLGREMDLFHFQEEGPGVVFWHGKGWRIFQTLVAYMRRRLAIDYEEVNAPQVLDTSLWETSGHWGWYQENMFGVKSAHAMTHPDDKEADNRVFALKPMNCPGHVQIFKHGLKSYRELPIRLAEFGLVHRYEPSGALHGLMRVRGFTQDDAHIFCTDEQMAAECLKINDLILSVYEDFGFKEIVVKLSTRPEKRVGSDALWDRAEAVMTDVLKTIEAQSEGRIKTGILPGEGAFYGPKFEYTLKDAIGREWQCGTTQVDFNLPERFGAFYIDSNSEKTQPVMIHRAICGSMERFLGILIENFAGHMPLWVSPLQVVVATITSEADAYGLEVAEALREAGLNVETDFRNEKINYKIREHSVTKVPVIIVCGRKEAEDRTVNIRRLGSQDQVSMGLDTAVESLALEATPPDVRRKADAKKAKAA.

Residues 1-64 form the TGS domain; sequence MSQSVSLTFP…TDGKIEIITR (64 aa). Positions 245 to 553 are catalytic; it reads DHRKLGREMD…LIENFAGHMP (309 aa). Zn(2+) contacts are provided by cysteine 347, histidine 398, and histidine 530.

The protein belongs to the class-II aminoacyl-tRNA synthetase family. Homodimer. Zn(2+) is required as a cofactor.

The protein resides in the cytoplasm. It carries out the reaction tRNA(Thr) + L-threonine + ATP = L-threonyl-tRNA(Thr) + AMP + diphosphate + H(+). Its function is as follows. Catalyzes the attachment of threonine to tRNA(Thr) in a two-step reaction: L-threonine is first activated by ATP to form Thr-AMP and then transferred to the acceptor end of tRNA(Thr). Also edits incorrectly charged L-seryl-tRNA(Thr). This Rhizobium etli (strain ATCC 51251 / DSM 11541 / JCM 21823 / NBRC 15573 / CFN 42) protein is Threonine--tRNA ligase.